Here is a 697-residue protein sequence, read N- to C-terminus: Glycine--tRNA ligase beta subunit (697 aa).

The protein belongs to the class-II aminoacyl-tRNA synthetase family. As to quaternary structure, tetramer of two alpha and two beta subunits.

The protein resides in the cytoplasm. The catalysed reaction is tRNA(Gly) + glycine + ATP = glycyl-tRNA(Gly) + AMP + diphosphate. This chain is Glycine--tRNA ligase beta subunit, found in Cereibacter sphaeroides (strain ATCC 17029 / ATH 2.4.9) (Rhodobacter sphaeroides).